Reading from the N-terminus, the 897-residue chain is Alpha-actinin-2 (897 aa).

Positions 1 to 257 (MNSMNQIETN…IMTYVSCFYH (257 aa)) are actin-binding. 2 Calponin-homology (CH) domains span residues 41 to 145 (KQQR…LRFA) and 154 to 260 (TSAK…HAFA). 4 Spectrin repeats span residues 284–394 (RLME…WLLN), 404–509 (HLAE…ALER), 519–630 (QLHL…SLQE), and 640–743 (RLRR…EVET). 2 EF-hand domains span residues 756 to 791 (EQMNDFRASFNHFDRRKNGLMDHDDFRACLISMGYD) and 792 to 827 (LGEAEFARIMSLVDPNGQGTVTFQSFIDFMTRETAD). Ca(2+)-binding residues include Asp769, Asn773, Asp780, Asp805, Asn807, and Thr811.

It belongs to the alpha-actinin family. As to quaternary structure, homodimer; antiparallel. Ubiquitinated by FBXL22, leading to proteasomal degradation.

It localises to the cytoplasm. Its subcellular location is the myofibril. The protein localises to the sarcomere. The protein resides in the z line. Its function is as follows. F-actin cross-linking protein which is thought to anchor actin to a variety of intracellular structures. This is a bundling protein. The sequence is that of Alpha-actinin-2 (ACTN2) from Gallus gallus (Chicken).